The chain runs to 204 residues: Facilitator of iron transport 3 (204 aa).

Residues 1 to 18 (MKFSSALVLSAVAATALA) form the signal peptide. Disordered stretches follow at residues 84 to 104 (SAAE…SGSS) and 133 to 175 (EGSS…SSTA). Residues 135-175 (SSNTWSPSSTSTSSEAATSSASTTATTTAETSSSATSSSTA) are compositionally biased toward low complexity. The GPI-anchor amidated glycine moiety is linked to residue Gly182. The propeptide at 183-204 (AADAITAGTGLMGAALAAVMLL) is removed in mature form.

In terms of processing, the GPI-anchor is attached to the protein in the endoplasmic reticulum and serves to target the protein to the cell surface. There, the glucosamine-inositol phospholipid moiety is cleaved off and the GPI-modified mannoprotein is covalently attached via its lipidless GPI glycan remnant to the 1,6-beta-glucan of the outer cell wall layer.

The protein localises to the secreted. Its subcellular location is the cell wall. It localises to the membrane. Its function is as follows. Involved in the uptake of non-siderophore and siderophore sources of iron. Has a role in the retention of iron in the cell wall and periplasmic space. This Saccharomyces cerevisiae (strain ATCC 204508 / S288c) (Baker's yeast) protein is Facilitator of iron transport 3 (FIT3).